A 66-amino-acid polypeptide reads, in one-letter code: Cold shock protein 1 (66 aa).

The CSD domain maps to 4-63 (GTVKWFNADKGYGFITGEDGNDVFVHFSAIQTDGFKTLEEGQKVTFDEESSDRGPQAANV). A disordered region spans residues 47 to 66 (VTFDEESSDRGPQAANVVPQ).

Its subcellular location is the cytoplasm. This chain is Cold shock protein 1 (csp), found in Lactiplantibacillus plantarum (strain ATCC BAA-793 / NCIMB 8826 / WCFS1) (Lactobacillus plantarum).